Reading from the N-terminus, the 417-residue chain is Tol-Pal system protein TolB (417 aa).

A signal peptide spans 1–16 (MKYLWLFLIYAIGLFA).

It belongs to the TolB family. The Tol-Pal system is composed of five core proteins: the inner membrane proteins TolA, TolQ and TolR, the periplasmic protein TolB and the outer membrane protein Pal. They form a network linking the inner and outer membranes and the peptidoglycan layer.

The protein resides in the periplasm. In terms of biological role, part of the Tol-Pal system, which plays a role in outer membrane invagination during cell division and is important for maintaining outer membrane integrity. This Helicobacter pylori (strain J99 / ATCC 700824) (Campylobacter pylori J99) protein is Tol-Pal system protein TolB.